A 452-amino-acid polypeptide reads, in one-letter code: Chromosomal replication initiator protein DnaA (452 aa).

The domain I, interacts with DnaA modulators stretch occupies residues Met-1–Ala-85. The segment at Ala-85–Ser-115 is domain II. Residues His-116–Ala-332 are domain III, AAA+ region. Positions 160, 162, 163, and 164 each coordinate ATP. The segment at His-333 to Ser-452 is domain IV, binds dsDNA.

This sequence belongs to the DnaA family. As to quaternary structure, oligomerizes as a right-handed, spiral filament on DNA at oriC.

It localises to the cytoplasm. Its function is as follows. Plays an essential role in the initiation and regulation of chromosomal replication. ATP-DnaA binds to the origin of replication (oriC) to initiate formation of the DNA replication initiation complex once per cell cycle. Binds the DnaA box (a 9 base pair repeat at the origin) and separates the double-stranded (ds)DNA. Forms a right-handed helical filament on oriC DNA; dsDNA binds to the exterior of the filament while single-stranded (ss)DNA is stabiized in the filament's interior. The ATP-DnaA-oriC complex binds and stabilizes one strand of the AT-rich DNA unwinding element (DUE), permitting loading of DNA polymerase. After initiation quickly degrades to an ADP-DnaA complex that is not apt for DNA replication. Binds acidic phospholipids. The chain is Chromosomal replication initiator protein DnaA from Legionella pneumophila (strain Paris).